The following is a 50-amino-acid chain: PsaJ-like protein asl3190 (50 aa).

A helical transmembrane segment spans residues 21–41; the sequence is VLAVISISVAFSTWAIFNYIF.

Belongs to the PsaJ family.

It is found in the cellular thylakoid membrane. The polypeptide is PsaJ-like protein asl3190 (Nostoc sp. (strain PCC 7120 / SAG 25.82 / UTEX 2576)).